The following is a 247-amino-acid chain: Proteasome subunit alpha type-7-1 (247 aa).

It belongs to the peptidase T1A family. In terms of assembly, the 26S proteasome consists of a 20S proteasome core and two 19S regulatory subunits. The 20S proteasome core is composed of 28 subunits that are arranged in four stacked rings, resulting in a barrel-shaped structure. The two end rings are each formed by seven alpha subunits, and the two central rings are each formed by seven beta subunits. The catalytic chamber with the active sites is on the inside of the barrel.

It is found in the cytoplasm. Its subcellular location is the nucleus. Its function is as follows. The proteasome is a multicatalytic proteinase complex which is characterized by its ability to cleave peptides with Arg, Phe, Tyr, Leu, and Glu adjacent to the leaving group at neutral or slightly basic pH. The proteasome has an ATP-dependent proteolytic activity. This Drosophila virilis (Fruit fly) protein is Proteasome subunit alpha type-7-1 (Pros28.1).